The following is a 124-amino-acid chain: Ribonuclease pancreatic (124 aa).

Over residues 1–13 (KETSAQKFERQHM) the composition is skewed to basic and acidic residues. Positions 1 to 25 (KETSAQKFERQHMDSTGSSSSSPTY) are disordered. Substrate-binding residues include Lys-7 and Arg-10. His-12 (proton acceptor) is an active-site residue. Intrachain disulfides connect Cys-26–Cys-84, Cys-40–Cys-95, Cys-58–Cys-110, and Cys-65–Cys-72. Substrate-binding positions include 41–45 (KPVNT), Lys-66, and Arg-85. Catalysis depends on His-119, which acts as the Proton donor.

The protein belongs to the pancreatic ribonuclease family. As to quaternary structure, monomer. Interacts with and forms tight 1:1 complexes with RNH1. Dimerization of two such complexes may occur. Interaction with RNH1 inhibits this protein. As to expression, pancreas.

It is found in the secreted. It catalyses the reaction an [RNA] containing cytidine + H2O = an [RNA]-3'-cytidine-3'-phosphate + a 5'-hydroxy-ribonucleotide-3'-[RNA].. It carries out the reaction an [RNA] containing uridine + H2O = an [RNA]-3'-uridine-3'-phosphate + a 5'-hydroxy-ribonucleotide-3'-[RNA].. Functionally, endonuclease that catalyzes the cleavage of RNA on the 3' side of pyrimidine nucleotides. Acts on single-stranded and double-stranded RNA. The sequence is that of Ribonuclease pancreatic (RNASE1) from Ondatra zibethicus (Muskrat).